Reading from the N-terminus, the 228-residue chain is Cytidylate kinase (228 aa).

17–25 (GPTASGKGT) lines the ATP pocket.

This sequence belongs to the cytidylate kinase family. Type 1 subfamily.

The protein resides in the cytoplasm. The catalysed reaction is CMP + ATP = CDP + ADP. The enzyme catalyses dCMP + ATP = dCDP + ADP. This is Cytidylate kinase from Burkholderia vietnamiensis (strain G4 / LMG 22486) (Burkholderia cepacia (strain R1808)).